A 287-amino-acid chain; its full sequence is Ethylene-responsive transcription factor ERF116 (287 aa).

The segment at residues 80–140 (YPVGVRPRPS…ASSGSAVSSS (61 aa)) is a DNA-binding region (AP2/ERF).

It belongs to the AP2/ERF transcription factor family. ERF subfamily.

Its subcellular location is the nucleus. Functionally, probably acts as a transcriptional activator. Binds to the GCC-box pathogenesis-related promoter element. May be involved in the regulation of gene expression by stress factors and by components of stress signal transduction pathways. The polypeptide is Ethylene-responsive transcription factor ERF116 (ERF116) (Arabidopsis thaliana (Mouse-ear cress)).